The primary structure comprises 310 residues: Forkhead box protein pes-1 (310 aa).

The span at 1 to 16 shows a compositional bias: polar residues; sequence MLPLSISTSPDPASQF. Disordered regions lie at residues 1-37, 58-77, 92-126, and 217-242; these read MLPL…GTAK, VSPS…SPAP, KQSS…SNPN, and SLRR…PNPI. A compositionally biased stretch (low complexity) spans 17–35; it reads PTVPDLPTLTPTPSPTSGT. The fork-head DNA-binding region spans 128 to 220; the sequence is RPAYSYNALI…IGKDCGSLRR (93 aa). The span at 218-231 shows a compositional bias: basic residues; it reads LRRKKNGKPRKYSK.

The protein localises to the nucleus. It localises to the cytoplasm. In terms of biological role, transcription factor. Plays a role in embryogenesis and later development, perhaps acting redundantly with forkhead protein fkh-2. The polypeptide is Forkhead box protein pes-1 (Caenorhabditis briggsae).